Consider the following 1170-residue polypeptide: Probable mRNA-capping enzyme (1170 aa).

The active-site N6-GMP-lysine intermediate is the K292. The mRNA cap 0 methyltransferase domain maps to 684–1007 (SNAAGMRAFN…LNRYYVFRKT (324 aa)). MRNA is bound at residue 693-694 (NN). S-adenosyl-L-methionine is bound by residues K697, G715, D737, and 813 to 815 (QFT).

It in the N-terminal section; belongs to the dsDNA virus mRNA guanylyltransferase family. This sequence in the C-terminal section; belongs to the class I-like SAM-binding methyltransferase superfamily. mRNA cap 0 methyltransferase family.

It is found in the virion. It catalyses the reaction a 5'-end triphospho-ribonucleoside in mRNA + H2O = a 5'-end diphospho-ribonucleoside in mRNA + phosphate + H(+). It carries out the reaction a 5'-end diphospho-ribonucleoside in mRNA + GTP + H(+) = a 5'-end (5'-triphosphoguanosine)-ribonucleoside in mRNA + diphosphate. The catalysed reaction is a 5'-end (5'-triphosphoguanosine)-ribonucleoside in mRNA + S-adenosyl-L-methionine = a 5'-end (N(7)-methyl 5'-triphosphoguanosine)-ribonucleoside in mRNA + S-adenosyl-L-homocysteine. Its pathway is mRNA processing; mRNA capping. Its function is as follows. Responsible for methylating the 5'-cap structure of mRNAs. The polypeptide is Probable mRNA-capping enzyme (Acanthamoeba polyphaga mimivirus (APMV)).